The following is a 248-amino-acid chain: 3-deoxy-manno-octulosonate cytidylyltransferase (248 aa).

Belongs to the KdsB family.

The protein localises to the cytoplasm. It carries out the reaction 3-deoxy-alpha-D-manno-oct-2-ulosonate + CTP = CMP-3-deoxy-beta-D-manno-octulosonate + diphosphate. Its pathway is nucleotide-sugar biosynthesis; CMP-3-deoxy-D-manno-octulosonate biosynthesis; CMP-3-deoxy-D-manno-octulosonate from 3-deoxy-D-manno-octulosonate and CTP: step 1/1. The protein operates within bacterial outer membrane biogenesis; lipopolysaccharide biosynthesis. Its function is as follows. Activates KDO (a required 8-carbon sugar) for incorporation into bacterial lipopolysaccharide in Gram-negative bacteria. This is 3-deoxy-manno-octulosonate cytidylyltransferase from Salmonella typhi.